A 202-amino-acid polypeptide reads, in one-letter code: Outer-membrane lipoprotein carrier protein (202 aa).

The N-terminal stretch at 1 to 20 (MKKQLLIGSVLLVASSQVWA) is a signal peptide.

This sequence belongs to the LolA family. As to quaternary structure, monomer.

The protein localises to the periplasm. Participates in the translocation of lipoproteins from the inner membrane to the outer membrane. Only forms a complex with a lipoprotein if the residue after the N-terminal Cys is not an aspartate (The Asp acts as a targeting signal to indicate that the lipoprotein should stay in the inner membrane). This chain is Outer-membrane lipoprotein carrier protein, found in Aeromonas salmonicida (strain A449).